Consider the following 512-residue polypeptide: Probable metalloreductase AIM14 (512 aa).

7 helical membrane-spanning segments follow: residues 20–40 (IKYG…ILIC), 61–81 (PLFI…VFHV), 97–117 (MSYA…SIGL), 132–152 (VIIA…ILEG), 161–181 (LWNF…IISL), 191–211 (YFYV…CLHA), and 218–235 (YAIA…ERYA). The Ferric oxidoreductase domain maps to 94-206 (FGRMSYALLP…NITVWLFVGL (113 aa)). The 126-residue stretch at 230–355 (IFERYAKSHS…GGSGISFALP (126 aa)) folds into the FAD-binding FR-type domain. Low complexity predominate over residues 427-436 (ESLPSSETPS). Positions 427-451 (ESLPSSETPSRTVNDDSLSQDTRPK) are disordered. The span at 437–447 (RTVNDDSLSQD) shows a compositional bias: polar residues.

Belongs to the ferric reductase (FRE) family. AIM14 subfamily.

The protein localises to the membrane. In terms of biological role, probable cell surface metalloreductase. May be involved in iron or copper homeostasis. This chain is Probable metalloreductase AIM14 (AIM14), found in Debaryomyces hansenii (strain ATCC 36239 / CBS 767 / BCRC 21394 / JCM 1990 / NBRC 0083 / IGC 2968) (Yeast).